The following is a 719-amino-acid chain: DNA ligase (719 aa).

NAD(+)-binding positions include 42–46 (DAEYD), 91–92 (SL), and glutamate 125. Lysine 127 (N6-AMP-lysine intermediate) is an active-site residue. Residues arginine 148, glutamate 184, lysine 300, and lysine 324 each coordinate NAD(+). Cysteine 429, cysteine 432, cysteine 447, and cysteine 453 together coordinate Zn(2+). One can recognise a BRCT domain in the interval 638-719 (TASSPIAGKT…WLQLIEGSYI (82 aa)).

The protein belongs to the NAD-dependent DNA ligase family. LigA subfamily. Mg(2+) serves as cofactor. Requires Mn(2+) as cofactor.

It catalyses the reaction NAD(+) + (deoxyribonucleotide)n-3'-hydroxyl + 5'-phospho-(deoxyribonucleotide)m = (deoxyribonucleotide)n+m + AMP + beta-nicotinamide D-nucleotide.. Its function is as follows. DNA ligase that catalyzes the formation of phosphodiester linkages between 5'-phosphoryl and 3'-hydroxyl groups in double-stranded DNA using NAD as a coenzyme and as the energy source for the reaction. It is essential for DNA replication and repair of damaged DNA. The chain is DNA ligase from Bartonella quintana (strain Toulouse) (Rochalimaea quintana).